Consider the following 578-residue polypeptide: MTFSTENNKQIVLGEELGPLSDNERLKKQSNLLRGTIAEDLQDRITGGFTADNFQLIRFHGMYQQDDRDIRNERTKQKLEPLHNVMLRARMPGGIITPTQWLAIDKFATEHSLYGSIRLTTRQTFQFHGVLKPNIKLMHQTLNNIGIDSIATAGDVNRNVLCTTNPVESELHQEAYEWAKKISEHLLPKTRAYAEIWLDGEKVESTEEDEPILGKTYLPRKFKTTVVIPPQNDVDVHANDLNFVAIADNGKLVGFNVLVGGGLAMTHGDTSTYPRRADDFGFIPLEKTLDVAAAVVTTQRDWGNRSNRKNAKTKYTLDRVGTDVFKAEVEKRAGIQFEASRPYEFTERGDRIGWVEGIDGKFHLALFIENGRLLDYPGKPLKTGVAEIAKIHKGDFRMTANQNLIVAGVPKSEKAKIEKIAREHGLMDDNVSEQRKNSMACVAFPTCPLAMAEAERFLPQFVTDVEGILEKHGLPENDNIILRVTGCPNGCGRAMLAEIGLVGKAPGRYNLHLGGNRAGTRVPKMYKENITDKQILEEIDLLVARWSKEREEGEAFGDFTIRAGIIQEVFVSKRDFYA.

Positions 441, 447, 487, and 491 each coordinate [4Fe-4S] cluster. Residue Cys491 participates in siroheme binding.

It belongs to the nitrite and sulfite reductase 4Fe-4S domain family. As to quaternary structure, alpha(8)-beta(8). The alpha component is a flavoprotein, the beta component is a hemoprotein. Requires siroheme as cofactor. [4Fe-4S] cluster serves as cofactor.

The enzyme catalyses hydrogen sulfide + 3 NADP(+) + 3 H2O = sulfite + 3 NADPH + 4 H(+). The protein operates within sulfur metabolism; hydrogen sulfide biosynthesis; hydrogen sulfide from sulfite (NADPH route): step 1/1. Its function is as follows. Component of the sulfite reductase complex that catalyzes the 6-electron reduction of sulfite to sulfide. This is one of several activities required for the biosynthesis of L-cysteine from sulfate. The protein is Sulfite reductase [NADPH] hemoprotein beta-component of Vibrio parahaemolyticus serotype O3:K6 (strain RIMD 2210633).